The primary structure comprises 574 residues: Meiotically up-regulated gene 72 protein (574 aa).

The segment at 339–374 (VRAGTPQSSPNFNPAMRRSPVGAASRSPSRSTIGIS) is disordered. Position 343 is a phosphothreonine (threonine 343). Positions 364–374 (RSPSRSTIGIS) are enriched in polar residues. Serine 392 carries the phosphoserine modification. Disordered regions lie at residues 422-451 (TSPSGLNPTGRPSRFGGRVRGNPLTMNKAG) and 495-574 (RNRR…RRMD). Polar residues predominate over residues 541 to 554 (LYDTSRYPTRNSKP).

The protein localises to the cytoplasm. Functionally, has a role in meiosis. This Schizosaccharomyces pombe (strain 972 / ATCC 24843) (Fission yeast) protein is Meiotically up-regulated gene 72 protein (mug72).